Here is a 1016-residue protein sequence, read N- to C-terminus: Poly [ADP-ribose] polymerase 1 (1016 aa).

Alanine 2 bears the N-acetylalanine mark. The segment at 9 to 93 (YRVEYAKSGR…TIKKMAETGG (85 aa)) adopts a PARP-type 1 zinc-finger fold. Residues cysteine 21 and cysteine 24 each contribute to the Zn(2+) site. Serine 41 bears the Phosphoserine mark. Histidine 53 and cysteine 56 together coordinate Zn(2+). Lysine 100 and lysine 108 each carry N6-acetyllysine. The PARP-type 2 zinc finger occupies 116-206 (FGAGYAKSNR…TLKKQLPAIK (91 aa)). Zn(2+) is bound by residues cysteine 128 and cysteine 131. Position 134 is an N6-acetyllysine (lysine 134). Zn(2+) is bound by residues histidine 162 and cysteine 165. A phosphoserine mark is found at serine 180 and serine 188. Residue lysine 206 forms a Glycyl lysine isopeptide (Lys-Gly) (interchain with G-Cter in SUMO1); alternate linkage. Lysine 206 is covalently cross-linked (Glycyl lysine isopeptide (Lys-Gly) (interchain with G-Cter in SUMO2); alternate). 2 consecutive short sequence motifs (nuclear localization signal) follow at residues 210–212 (KRK) and 224–229 (KKKSKK). The PADR1 zinc-binding domain occupies 228–362 (KKEKDKEIKL…IKKQDRIFPP (135 aa)). Lysine 252 is covalently cross-linked (Glycyl lysine isopeptide (Lys-Gly) (interchain with G-Cter in SUMO2)). A phosphoserine mark is found at serine 277 and serine 280. The tract at residues 293 to 335 (GALLPCEECSGQLVFKGDAYYCTGDVTAWTKCMVKTQTPNRKE) is zinc ribbon. Cysteine 298, cysteine 301, cysteine 314, and cysteine 324 together coordinate Zn(2+). A disordered region spans residues 360 to 390 (FPPESSTPVGAAAPPSAASAPAAVHSGPPDK). A compositionally biased stretch (low complexity) spans 365–386 (STPVGAAAPPSAASAPAAVHSG). Positions 376–526 (AASAPAAVHS…GTNKSEKRMK (151 aa)) are automodification domain. One can recognise a BRCT domain in the interval 387 to 478 (PPDKPLSNMK…KSLQELLSTH (92 aa)). Position 389 is a polyADP-ribosyl aspartic acid (aspartate 389). Glutamate 409, glutamate 415, glutamate 437, glutamate 446, glutamate 447, glutamate 450, and glutamate 458 each carry polyADP-ribosyl glutamic acid. Residue lysine 469 forms a Glycyl lysine isopeptide (Lys-Gly) (interchain with G-Cter in SUMO2) linkage. PolyADP-ribosyl glutamic acid occurs at positions 473 and 486. A Glycyl lysine isopeptide (Lys-Gly) (interchain with G-Cter in SUMO1); alternate cross-link involves residue lysine 488. Lysine 488 is covalently cross-linked (Glycyl lysine isopeptide (Lys-Gly) (interchain with G-Cter in SUMO2); alternate). PolyADP-ribosyl glutamic acid occurs at positions 490 and 493. The segment at 494 to 523 (AVGPKGKSGAAPSKKSKGPVKEEGTNKSEK) is disordered. Residues 496–506 (GPKGKSGAAPS) show a composition bias toward low complexity. ADP-ribosylserine is present on residues serine 501, serine 506, and serine 509. The segment covering 512–523 (PVKEEGTNKSEK) has biased composition (basic and acidic residues). Residue lysine 514 forms a Glycyl lysine isopeptide (Lys-Gly) (interchain with G-Cter in SUMO2) linkage. A polyADP-ribosyl glutamic acid mark is found at glutamate 515 and glutamate 516. ADP-ribosylserine is present on serine 521. PolyADP-ribosyl glutamic acid is present on glutamate 522. Lysine 523 carries the N6-(ADP-ribosyl)lysine modification. Lysine 530 participates in a covalent cross-link: Glycyl lysine isopeptide (Lys-Gly) (interchain with G-Cter in SUMO2). Positions 544–640 (NAHVLEKGGK…KNFTKHPKKF (97 aa)) constitute a WGR domain. Residue threonine 596 is modified to Phosphothreonine. N6-acetyllysine occurs at positions 602 and 623. The region spanning 664–781 (KSKLPKPVQN…DIEVAYSLLR (118 aa)) is the PARP alpha-helical domain. Lysine 750 is covalently cross-linked (Glycyl lysine isopeptide (Lys-Gly) (interchain with G-Cter in SUMO1); alternate). A Glycyl lysine isopeptide (Lys-Gly) (interchain with G-Cter in SUMO2); alternate cross-link involves residue lysine 750. Residues serine 784 and serine 788 each carry the phosphoserine modification. Residues 790 to 1016 (DPIDVNYEKL…LKFNFKTSLW (227 aa)) enclose the PARP catalytic domain. NAD(+) is bound by residues 864-866 (HGS), glycine 873, arginine 880, and serine 906. Glutamate 990 (for poly [ADP-ribose] polymerase activity) is an active-site residue.

It belongs to the ARTD/PARP family. As to quaternary structure, homodimer; PARP-type zinc-fingers from separate PARP1 molecules form a dimer module that specifically recognizes DNA strand breaks. Heterodimer; heterodimerizes with PARP2. Interacts (via the PARP catalytic domain) with HPF1. Interacts with NMNAT1. Interacts with nucleosomes; with a preference for nucleosomes containing H2A.X. Interacts with APTX. Component of a base excision repair (BER) complex, containing at least XRCC1, PARP1, PARP2, POLB and LRIG3. Interacts with SRY. The SWAP complex consists of NPM1, NCL, PARP1 and SWAP70. Interacts with TIAM2. Interacts with PARP3; leading to activate PARP1 in absence of DNA. Interacts (when poly-ADP-ribosylated) with CHD1L (via macro domain). Interacts with the DNA polymerase alpha catalytic subunit POLA1; this interaction functions as part of the control of replication fork progression. Interacts with EEF1A1 and TXK. Interacts with RNF4. Interacts with RNF146. Interacts with ZNF423. Interacts with APLF. Interacts with SNAI1 (via zinc fingers); the interaction requires SNAI1 to be poly-ADP-ribosylated and non-phosphorylated (active) by GSK3B. Interacts (when poly-ADP-ribosylated) with PARP9. Interacts with NR4A3; activates PARP1 by improving acetylation of PARP1 and suppressing the interaction between PARP1 and SIRT1. Interacts (via catalytic domain) with PUM3; the interaction inhibits the poly-ADP-ribosylation activity of PARP1 and the degradation of PARP1 by CASP3 following genotoxic stress. Interacts with ZNF365. Interacts with RRP1B. Interacts with TIMELESS; the interaction is direct. Interacts with CGAS; leading to impede the formation of the PARP1-TIMELESS complex. Interacts with KHDC3L, the interaction is increased following the formation of DNA double-strand breaks. Interacts (when auto-poly-ADP-ribosylated) with XRCC1; leading to inhibit PARP1 ADP-ribosyltransferase activity. Interacts with SPINDOC; promoting PARP1 ADP-ribosyltransferase activity. Interacts with BANF1; leading to inhibit PARP1 ADP-ribosyltransferase activity in response to oxidative DNA damage. Interacts (when sumoylated and ubiquitinated) with VCP/p97; leading to its extraction from chromatin. Interacts with YARS1; promoting PARP1 ADP-ribosyltransferase activity. Interacts with PACMP micropeptide; Interacts with PACMP micropeptide; interaction. Interacts (when poly-ADP-ribosylated) with isoform 1 of MACROH2A1; MACROH2A1 specifically binds to poly-ADP-ribose chains and inhibits PARP1 activity, limiting the consumption of nuclear NAD(+). Interacts with CARM1; promoting recruitment to replication forks. Interacts with RECQL. Interacts with ZNF32; the interaction reshapes ZNF432 interacting proteins. Interacts with TPRN; TPRN interacts with a number of DNA damage response proteins, is recruited to sites of DNA damage and may play a role in DNA damage repair. In terms of assembly, interacts (when auto-poly-ADP-ribosylated) with AIFM1. Poly-ADP-ribosylated on serine, glutamate and aspartate residues by autocatalysis. Auto-ADP-ribosylation on serine takes place following interaction with HPF1. Auto poly-ADP-ribosylation on serine residues promotes its dissociation from chromatin. Poly-ADP-ribosylated by PARP2; poly-ADP-ribosylation mediates the recruitment of CHD1L to DNA damage sites. Mono-ADP-ribosylated at Lys-523 by SIRT6 in response to oxidative stress, promoting recruitment to double-strand breaks (DSBs) sites. Post-translationally, S-nitrosylated, leading to inhibit transcription regulation activity. In terms of processing, phosphorylated at Thr-596 by PRKDC in response to DNA damage following virus infection, promoting its translocation to the cytosol. Phosphorylated by TXK. Proteolytically cleaved by caspase-3 (CASP3) and caspase-7 (CASP7) in response to apoptosis to generate the Poly [ADP-ribose] polymerase 1, processed N-terminus and Poly [ADP-ribose] polymerase 1, processed C-terminus forms. Post-translationally, sumoylated with SUMO1 or SUMO2 by PIAS4 following prolonged residence (trapping) to chromatin. Sumoylation promotes ubiquitination by RNF4 and removal from chromatin by VCP/p97. In terms of processing, ubiquitinated by RNF4 following sumoylation by PIAS4 in response to prolonged residence (trapping) to chromatin. Ubiquitination promotes removal from chromatin by VCP/p97.

The protein resides in the chromosome. The protein localises to the nucleus. It is found in the nucleolus. It localises to the cytoplasm. Its subcellular location is the cytosol. The catalysed reaction is NAD(+) + (ADP-D-ribosyl)n-acceptor = nicotinamide + (ADP-D-ribosyl)n+1-acceptor + H(+).. The enzyme catalyses L-seryl-[protein] + NAD(+) = O-(ADP-D-ribosyl)-L-seryl-[protein] + nicotinamide + H(+). It carries out the reaction L-aspartyl-[protein] + NAD(+) = 4-O-(ADP-D-ribosyl)-L-aspartyl-[protein] + nicotinamide. It catalyses the reaction L-glutamyl-[protein] + NAD(+) = 5-O-(ADP-D-ribosyl)-L-glutamyl-[protein] + nicotinamide. The catalysed reaction is L-tyrosyl-[protein] + NAD(+) = O-(ADP-D-ribosyl)-L-tyrosyl-[protein] + nicotinamide + H(+). The enzyme catalyses L-histidyl-[protein] + NAD(+) = N(tele)-(ADP-D-ribosyl)-L-histidyl-[protein] + nicotinamide + H(+). ADP-ribosyltransferase activity is regulated via an allosteric activation mechanism. In absence of activation signal, PARP1 is autoinhibited by the PARP alpha-helical domain (also named HD region), which prevents effective NAD(+)-binding. Activity is highly stimulated by signals, such as DNA strand breaks. Binding to damaged DNA unfolds the PARP alpha-helical domain, relieving autoinhibition. Poly-ADP-ribosyltransferase activity is tightly regulated and PARP1 is removed from damaged chromatin following initial poly-ADP-ribosylation of chromatin to avoid prolonged residence (trapping) that has cytotoxic consequences. A number of factors (VCP/p97) or post-translational modifications (auto-poly-ADP-ribosylation or ubiquitination) promote PARP1 removal from chromatin. Its function is as follows. Poly-ADP-ribosyltransferase that mediates poly-ADP-ribosylation of proteins and plays a key role in DNA repair. Mediates glutamate, aspartate, serine, histidine or tyrosine ADP-ribosylation of proteins: the ADP-D-ribosyl group of NAD(+) is transferred to the acceptor carboxyl group of target residues and further ADP-ribosyl groups are transferred to the 2'-position of the terminal adenosine moiety, building up a polymer with an average chain length of 20-30 units. Serine ADP-ribosylation of proteins constitutes the primary form of ADP-ribosylation of proteins in response to DNA damage. Specificity for the different amino acids is conferred by interacting factors, such as HPF1 and NMNAT1. Following interaction with HPF1, catalyzes serine ADP-ribosylation of target proteins; HPF1 confers serine specificity by completing the PARP1 active site. Also catalyzes tyrosine ADP-ribosylation of target proteins following interaction with HPF1. Following interaction with NMNAT1, catalyzes glutamate and aspartate ADP-ribosylation of target proteins; NMNAT1 confers glutamate and aspartate specificity. PARP1 initiates the repair of DNA breaks: recognizes and binds DNA breaks within chromatin and recruits HPF1, licensing serine ADP-ribosylation of target proteins, such as histones (H2BS6ADPr and H3S10ADPr), thereby promoting decompaction of chromatin and the recruitment of repair factors leading to the reparation of DNA strand breaks. HPF1 initiates serine ADP-ribosylation but restricts the polymerase activity of PARP1 in order to limit the length of poly-ADP-ribose chains. In addition to base excision repair (BER) pathway, also involved in double-strand breaks (DSBs) repair: together with TIMELESS, accumulates at DNA damage sites and promotes homologous recombination repair by mediating poly-ADP-ribosylation. Mediates the poly-ADP-ribosylation of a number of proteins, including itself, APLF, CHFR and NFAT5. In addition to proteins, also able to ADP-ribosylate DNA: catalyzes ADP-ribosylation of DNA strand break termini containing terminal phosphates and a 2'-OH group in single- and double-stranded DNA, respectively. Required for PARP9 and DTX3L recruitment to DNA damage sites. PARP1-dependent PARP9-DTX3L-mediated ubiquitination promotes the rapid and specific recruitment of 53BP1/TP53BP1, UIMC1/RAP80, and BRCA1 to DNA damage sites. PARP1-mediated DNA repair in neurons plays a role in sleep: senses DNA damage in neurons and promotes sleep, facilitating efficient DNA repair. In addition to DNA repair, also involved in other processes, such as transcription regulation, programmed cell death, membrane repair, adipogenesis and innate immunity. Acts as a repressor of transcription: binds to nucleosomes and modulates chromatin structure in a manner similar to histone H1, thereby altering RNA polymerase II. Acts both as a positive and negative regulator of transcription elongation, depending on the context. Acts as a positive regulator of transcription elongation by mediating poly-ADP-ribosylation of NELFE, preventing RNA-binding activity of NELFE and relieving transcription pausing. Acts as a negative regulator of transcription elongation in response to DNA damage by catalyzing poly-ADP-ribosylation of CCNT1, disrupting the phase separation activity of CCNT1 and subsequent activation of CDK9. Involved in replication fork progression following interaction with CARM1: mediates poly-ADP-ribosylation at replication forks, slowing fork progression. Poly-ADP-ribose chains generated by PARP1 also play a role in poly-ADP-ribose-dependent cell death, a process named parthanatos. Also acts as a negative regulator of the cGAS-STING pathway. Acts by mediating poly-ADP-ribosylation of CGAS: PARP1 translocates into the cytosol following phosphorylation by PRKDC and catalyzes poly-ADP-ribosylation and inactivation of CGAS. Acts as a negative regulator of adipogenesis: catalyzes poly-ADP-ribosylation of histone H2B on 'Glu-35' (H2BE35ADPr) following interaction with NMNAT1, inhibiting phosphorylation of H2B at 'Ser-36' (H2BS36ph), thereby blocking expression of pro-adipogenetic genes. Involved in the synthesis of ATP in the nucleus, together with NMNAT1, PARG and NUDT5. Nuclear ATP generation is required for extensive chromatin remodeling events that are energy-consuming. Promotes AIFM1-mediated apoptosis. This form, which translocates into the cytoplasm following cleavage by caspase-3 (CASP3) and caspase-7 (CASP7) in response to apoptosis, is auto-poly-ADP-ribosylated and serves as a poly-ADP-ribose carrier to induce AIFM1-mediated apoptosis. Functionally, this cleavage form irreversibly binds to DNA breaks and interferes with DNA repair, promoting DNA damage-induced apoptosis. The protein is Poly [ADP-ribose] polymerase 1 (PARP1) of Bos taurus (Bovine).